The chain runs to 116 residues: MLLTPAKTTRTEDSANSTDDSSKSSNSFMRAIVSSLMVKPITSLTNTVTCRQSSHHNSSPSKITRYDLIKAAAENDLKRSKSQGREKSRRNSNRRNNEEIFVANTASEIQRTKSSI.

2 disordered regions span residues Met1–Asn26 and Glu74–Ile116. Over residues Ser14 to Asn26 the composition is skewed to low complexity. The segment covering Glu74–Glu86 has biased composition (basic and acidic residues). The segment covering Asn104–Ile116 has biased composition (polar residues).

This is an uncharacterized protein from Saccharomyces cerevisiae (strain ATCC 204508 / S288c) (Baker's yeast).